Consider the following 465-residue polypeptide: MAIQLTRRGALSLLLFLTPAVMPTWYAGSGYYPDESYNEVYAEEVPQTPILDYKVPRWCYTLNIQDGEATCYSPRGGNYHSSLGTRCELSCDRGFRLIGRRSVQCLPSRRWSGTAYCRQMRCHALPFITSGTYTCTNGVLLDSRCDYSCSSGYHLEGDRSRICMEDGRWSGGEPVCVDIDPPKIRCPHSREKMAEPEKLTARVYWDPPVVKDSADGTITRLTLRGPEPGSHFPEGEHVIRYTAYDRAYNRASCKFIVKVQVRRCPTLKPPLHGYLTCTSAGDNYGATCEYHCDGGYERQGTSSRVCQSSRQWSGSPPVCVPMKINVNVNSAAGLLDQFYEKRRLLIISAPDPSNRYYKMQISMLQQSTCGLDLRHVTIIELVGQPPQEVGRIREHQLSANIIEELRQFQHLTRSYFNMVLIDKQGIDRERYMEPVTPEEIFTFIDDYLLSNEELIQRREQRDICD.

The N-terminal stretch at 1–23 (MAIQLTRRGALSLLLFLTPAVMP) is a signal peptide. 3 Sushi domains span residues 69–119 (ATCY…YCRQ), 120–178 (MRCH…VCVD), and 262–321 (RRCP…VCVP). 4 cysteine pairs are disulfide-bonded: Cys71/Cys105, Cys91/Cys117, Cys122/Cys163, and Cys149/Cys176. Positions 177-261 (VDIDPPKIRC…SCKFIVKVQV (85 aa)) constitute an HYR domain. Intrachain disulfides connect Cys264–Cys306 and Cys292–Cys319.

As to quaternary structure, forms homooligomers. Interacts with PLAUR (via the UPAR/Ly6 domains), ADAMTS4 and CTSB. Interacts with HGF; the interaction increases the mitogenic activity of HGF. In terms of processing, contains chondroitin sulfate chains.

The protein resides in the secreted. It localises to the cytoplasm. It is found in the cell surface. Its subcellular location is the synapse. Acts as a ligand for the urokinase plasminogen activator surface receptor. Plays a role in angiogenesis by inducing endothelial cell migration and the formation of vascular network (cords). Involved in cellular migration and adhesion. Increases the phosphorylation levels of FAK. Interacts with and increases the mitogenic activity of HGF. Promotes synapse formation. In Bos taurus (Bovine), this protein is Sushi repeat-containing protein SRPX2 (SRPX2).